A 270-amino-acid polypeptide reads, in one-letter code: BPI fold-containing family A member 5 (270 aa).

The N-terminal stretch at 1–19 is a signal peptide; sequence MFLAGSFIVLCGLLAQSTA. A disulfide bridge links C196 with C238.

Belongs to the BPI/LBP/Plunc superfamily. Plunc family. As to expression, expressed in interpapillar epithelium of the anterior part of the tongue.

Its subcellular location is the secreted. In terms of biological role, may play a role in innate immunity in the oral cavity. The sequence is that of BPI fold-containing family A member 5 (Bpifa5) from Mus musculus (Mouse).